The following is a 201-amino-acid chain: 3-isopropylmalate dehydratase small subunit (201 aa).

This sequence belongs to the LeuD family. LeuD type 1 subfamily. As to quaternary structure, heterodimer of LeuC and LeuD.

The catalysed reaction is (2R,3S)-3-isopropylmalate = (2S)-2-isopropylmalate. It participates in amino-acid biosynthesis; L-leucine biosynthesis; L-leucine from 3-methyl-2-oxobutanoate: step 2/4. Functionally, catalyzes the isomerization between 2-isopropylmalate and 3-isopropylmalate, via the formation of 2-isopropylmaleate. The sequence is that of 3-isopropylmalate dehydratase small subunit from Rhizobium meliloti (strain 1021) (Ensifer meliloti).